Here is a 468-residue protein sequence, read N- to C-terminus: Cysteine--tRNA ligase (468 aa).

C27 provides a ligand contact to Zn(2+). The 'HIGH' region signature appears at 29–39 (PTVYDDAHLGH). Positions 204, 234, and 238 each coordinate Zn(2+). A 'KMSKS' region motif is present at residues 266 to 270 (KMSKS). K269 contributes to the ATP binding site.

This sequence belongs to the class-I aminoacyl-tRNA synthetase family. Monomer. Zn(2+) is required as a cofactor.

It is found in the cytoplasm. The catalysed reaction is tRNA(Cys) + L-cysteine + ATP = L-cysteinyl-tRNA(Cys) + AMP + diphosphate. The polypeptide is Cysteine--tRNA ligase (Campylobacter hominis (strain ATCC BAA-381 / DSM 21671 / CCUG 45161 / LMG 19568 / NCTC 13146 / CH001A)).